A 389-amino-acid polypeptide reads, in one-letter code: Chalcone synthase 8 (389 aa).

The active site involves cysteine 164.

The protein belongs to the thiolase-like superfamily. Chalcone/stilbene synthases family.

The catalysed reaction is (E)-4-coumaroyl-CoA + 3 malonyl-CoA + 3 H(+) = 2',4,4',6'-tetrahydroxychalcone + 3 CO2 + 4 CoA. Its pathway is secondary metabolite biosynthesis; flavonoid biosynthesis. The primary product of this enzyme is 4,2',4',6'-tetrahydroxychalcone (also termed naringenin-chalcone or chalcone) which can under specific conditions spontaneously isomerize into naringenin. The sequence is that of Chalcone synthase 8 (CHS8) from Medicago sativa (Alfalfa).